Consider the following 299-residue polypeptide: Probable alpha-L-glutamate ligase 2 (299 aa).

Residues 104–287 (MQLMSRRGIG…VAGAIIEFVE (184 aa)) form the ATP-grasp domain. Residues K141, 178 to 179 (EY), D187, and 211 to 213 (RSN) contribute to the ATP site. Mg(2+) is bound by residues D248, E260, and N262. Residues D248, E260, and N262 each coordinate Mn(2+).

The protein belongs to the RimK family. Requires Mg(2+) as cofactor. Mn(2+) is required as a cofactor.

The polypeptide is Probable alpha-L-glutamate ligase 2 (Shewanella sp. (strain MR-4)).